The chain runs to 181 residues: Lipoprotein signal peptidase (181 aa).

The next 3 helical transmembrane spans lie at 25–45, 86–106, and 107–127; these read LFYK…QVFI, LVYF…VFMV, and KYSY…NFFD. Catalysis depends on residues D138 and D153. A helical transmembrane segment spans residues 149 to 169; that stretch reads FNFADCCITFGFIGLFFCFLI.

Belongs to the peptidase A8 family.

The protein resides in the cell membrane. It carries out the reaction Release of signal peptides from bacterial membrane prolipoproteins. Hydrolyzes -Xaa-Yaa-Zaa-|-(S,diacylglyceryl)Cys-, in which Xaa is hydrophobic (preferably Leu), and Yaa (Ala or Ser) and Zaa (Gly or Ala) have small, neutral side chains.. The protein operates within protein modification; lipoprotein biosynthesis (signal peptide cleavage). Functionally, this protein specifically catalyzes the removal of signal peptides from prolipoproteins. The chain is Lipoprotein signal peptidase from Mycoplasma genitalium (strain ATCC 33530 / DSM 19775 / NCTC 10195 / G37) (Mycoplasmoides genitalium).